Reading from the N-terminus, the 448-residue chain is Probable cytosolic Fe-S cluster assembly factor Bm6838 (448 aa).

The [4Fe-4S] cluster site is built by Cys27, Cys66, Cys69, Cys72, Cys170, Cys226, Cys370, and Cys374.

This sequence belongs to the NARF family.

In terms of biological role, component of the cytosolic iron-sulfur (Fe/S) protein assembly machinery. Required for maturation of extramitochondrial Fe/S proteins. This Brugia malayi (Filarial nematode worm) protein is Probable cytosolic Fe-S cluster assembly factor Bm6838.